Here is a 367-residue protein sequence, read N- to C-terminus: Glutamate 5-kinase (367 aa).

Lysine 9 lines the ATP pocket. Residues serine 49, aspartate 136, and asparagine 148 each coordinate substrate. Residues threonine 168–aspartate 169 and threonine 210–lysine 216 contribute to the ATP site. The PUA domain maps to serine 276 to arginine 350.

This sequence belongs to the glutamate 5-kinase family.

It is found in the cytoplasm. It carries out the reaction L-glutamate + ATP = L-glutamyl 5-phosphate + ADP. Its pathway is amino-acid biosynthesis; L-proline biosynthesis; L-glutamate 5-semialdehyde from L-glutamate: step 1/2. In terms of biological role, catalyzes the transfer of a phosphate group to glutamate to form L-glutamate 5-phosphate. The protein is Glutamate 5-kinase of Bacillus mycoides (strain KBAB4) (Bacillus weihenstephanensis).